A 610-amino-acid polypeptide reads, in one-letter code: Myoneurin (610 aa).

Residues 24 to 89 (CDCTVVIGEF…IYTGTLNLDS (66 aa)) form the BTB domain. Residues 156-199 (SEVSTDSVQANPKPRALTKKSSQSKKKKKAFSSQKPGQSKAVQY) form a disordered region. A compositionally biased stretch (basic residues) spans 171–185 (ALTKKSSQSKKKKKA). Short sequence motifs (nuclear localization signal) lie at residues 174–190 (KKSS…SSQK) and 257–262 (KRKRRK). 8 C2H2-type zinc fingers span residues 302-324 (PMCN…MRIH), 330-352 (YVCH…VRTH), 358-381 (YKCE…RMHH), 387-409 (YKCD…ARKH), 415-437 (YVCD…VRRH), 443-465 (YVCD…SRKH), 471-493 (YICG…FRSH), and 499-522 (FICE…TKVH). Residues 519–548 (TKVHSGTDKNPDCSVDDHAVSEQDSVQRSP) are disordered. Over residues 523–539 (SGTDKNPDCSVDDHAVS) the composition is skewed to basic and acidic residues.

It belongs to the krueppel C2H2-type zinc-finger protein family. In terms of tissue distribution, mainly expressed in the neuromuscular system. Located in and around synaptic myonuclei in adult muscle. Expression is dysregulated after nerve injury. Also found in the cerebellum, testis, heart, brain and liver.

Its subcellular location is the nucleus. The polypeptide is Myoneurin (Mynn) (Mus musculus (Mouse)).